The sequence spans 1444 residues: Probable serine/threonine-protein kinase irlC (1444 aa).

The interval T335 to K370 is disordered. Residues N338–N368 show a composition bias toward low complexity. The SWIM-type zinc-finger motif lies at F495 to Y529. A compositionally biased stretch (low complexity) spans T584 to E613. Disordered stretches follow at residues T584–K619 and Q864–I938. Coiled coils occupy residues N593–E620 and I847–I879. Residues Q864 to K876 show a composition bias toward basic residues. A compositionally biased stretch (low complexity) spans S885–P937. Residues R981–F1246 enclose the Protein kinase domain. Residues L987–L995 and K1010 each bind ATP. The active-site Proton acceptor is the D1116. A KEN domain is found at N1279–K1444.

Belongs to the protein kinase superfamily. Ser/Thr protein kinase family.

It carries out the reaction L-seryl-[protein] + ATP = O-phospho-L-seryl-[protein] + ADP + H(+). The enzyme catalyses L-threonyl-[protein] + ATP = O-phospho-L-threonyl-[protein] + ADP + H(+). The chain is Probable serine/threonine-protein kinase irlC (irlC) from Dictyostelium discoideum (Social amoeba).